A 288-amino-acid chain; its full sequence is Bifunctional protein FolD 2 (288 aa).

NADP(+)-binding positions include 166–168 (GRS) and Ser191.

It belongs to the tetrahydrofolate dehydrogenase/cyclohydrolase family. As to quaternary structure, homodimer.

The enzyme catalyses (6R)-5,10-methylene-5,6,7,8-tetrahydrofolate + NADP(+) = (6R)-5,10-methenyltetrahydrofolate + NADPH. It carries out the reaction (6R)-5,10-methenyltetrahydrofolate + H2O = (6R)-10-formyltetrahydrofolate + H(+). It participates in one-carbon metabolism; tetrahydrofolate interconversion. Catalyzes the oxidation of 5,10-methylenetetrahydrofolate to 5,10-methenyltetrahydrofolate and then the hydrolysis of 5,10-methenyltetrahydrofolate to 10-formyltetrahydrofolate. The chain is Bifunctional protein FolD 2 from Frankia alni (strain DSM 45986 / CECT 9034 / ACN14a).